The chain runs to 224 residues: UPF0758 protein VF_0126 (224 aa).

The 123-residue stretch at 102-224 folds into the MPN domain; it reads ALTSPEHTKR…IVSFAERGWI (123 aa). Zn(2+) is bound by residues His173, His175, and Asp186. The JAMM motif motif lies at 173–186; it reads HNHPSGVAEPSQAD.

This sequence belongs to the UPF0758 family.

This Aliivibrio fischeri (strain ATCC 700601 / ES114) (Vibrio fischeri) protein is UPF0758 protein VF_0126.